A 700-amino-acid chain; its full sequence is MAAAAVATPGATVLPPSVPSAAPGAKAPAAGAGKGPGNLLEITGEANIVNYMKNRLRKGAMKRKGLEMVNGHRFGVRFFKNPTYCGHCKDFIWGFGKQGFQCEECRFNIHQKCCKFVVFKCPGKDTDFDADCAKVKHGWISTTYTTPTFCDECGLLLHGVAHQGVKCENCNLNVHHACQETVPPMCGADISEVRGKLLLYVELKGNNLKVDIKEAANLIPMDTNGFSDPYIAVQMHPDRSGRTKKKTKTIQKNLNPVFNETFTFELQPQDRDKRLLIEVWDWDRTSRNDFMGSFSFSLEELQKEPVDGWYKFLSQVEGEHYNIPCVDAFNDIARLRDEVRHDRRPNEKRRMDNKDMPHNMSKRDMIRAADFNFVKVIGKGSFGKVLLAERRGTDELYAVKVLRKDVIIQTDDMELPMNEKKILALSGRPPFLVSMHSCFQTMDRLFFVMEYCKGGDLMYHMQQYGRFKESVAIFYAVEVAIALFFLHERDIIYRDLKLDNILLDGEGHVKLVDFGLSKEGVTERQTTRTFCGTPNYMAPEIVSYDPYSIAADWWSFGVLLFEFMAGQAPFEGDDETTVFRNIKDKKAVFPKHFSVEAMDIITSFLTKKPNNRLGAGRYARQEITTHPFFRNVDWDKAEACEMEPPIKPMIKHRKDISNFDDAFTKEKTDLTPTDKLFMMNLDQNDFIGFSFMNPEFITII.

2 consecutive Phorbol-ester/DAG-type zinc fingers follow at residues 71-121 and 136-186; these read GHRF…VFKC and KHGW…PPMC. The 122-residue stretch at 189–310 folds into the C2 domain; it reads DISEVRGKLL…LQKEPVDGWY (122 aa). Positions 222, 228, 281, 283, 286, and 289 each coordinate Ca(2+). In terms of domain architecture, Protein kinase spans 371–629; sequence FNFVKVIGKG…RQEITTHPFF (259 aa). ATP-binding positions include 377–385 and lysine 400; that span reads IGKGSFGKV. Aspartate 495 serves as the catalytic Proton acceptor. Residues 630-700 form the AGC-kinase C-terminal domain; sequence RNVDWDKAEA…FMNPEFITII (71 aa).

It belongs to the protein kinase superfamily. AGC Ser/Thr protein kinase family. PKC subfamily. It depends on Ca(2+) as a cofactor. Exclusively expressed in photoreceptor cells.

The enzyme catalyses L-seryl-[protein] + ATP = O-phospho-L-seryl-[protein] + ADP + H(+). It carries out the reaction L-threonyl-[protein] + ATP = O-phospho-L-threonyl-[protein] + ADP + H(+). Its function is as follows. This is a calcium-activated, phospholipid-dependent, serine- and threonine-specific enzyme. This isozyme is a negative regulator of the visual transduction cascade and has been shown to be required for photoreceptor cell inactivation and light adaptation. Negative regulation is dependent on interaction with scaffolding protein inaD. Acts in a hh-signaling pathway which regulates the Duox-dependent gut immune response to bacterial uracil; required for the activation of Cad99C and consequently Cad99C-dependent endosome formation, which is essential for the Duox-dependent production of reactive oxygen species (ROS) in response to intestinal bacterial infection. In Drosophila melanogaster (Fruit fly), this protein is Protein kinase C, eye isozyme (inaC).